A 213-amino-acid polypeptide reads, in one-letter code: Adenylate kinase (213 aa).

Position 10-15 (10-15) interacts with ATP; sequence GSGKGT. The tract at residues 30-59 is NMP; it reads STGDLFRTNIENDTPLGKEIKQIVENGQLV. AMP contacts are provided by residues Thr-31, Arg-36, 57–59, 85–88, and Gln-92; these read QLV and GFPR. The segment at 121–158 is LID; sequence GRRICQSCCKIFNIYTLPTKEKEICDFCQGILYQRKDD. Arg-122 serves as a coordination point for ATP. Residues Cys-125 and Cys-128 each contribute to the Zn(2+) site. 131 to 132 contacts ATP; that stretch reads IF. 2 residues coordinate Zn(2+): Cys-145 and Cys-148. The AMP site is built by Arg-155 and Arg-166. ATP is bound at residue Lys-194.

The protein belongs to the adenylate kinase family. In terms of assembly, monomer.

It is found in the cytoplasm. The catalysed reaction is AMP + ATP = 2 ADP. It functions in the pathway purine metabolism; AMP biosynthesis via salvage pathway; AMP from ADP: step 1/1. Functionally, catalyzes the reversible transfer of the terminal phosphate group between ATP and AMP. Plays an important role in cellular energy homeostasis and in adenine nucleotide metabolism. In Borrelia duttonii (strain Ly), this protein is Adenylate kinase.